We begin with the raw amino-acid sequence, 757 residues long: Mitofusin-2 (757 aa).

At 1 to 604 the chain is on the cytoplasmic side; the sequence is MSLLFSRCNS…TQEELMVSMV (604 aa). The tract at residues 30-94 is part of a helix bundle domain, formed by helices from N-terminal and C-terminal regions; the sequence is KHFVTAKKKI…VRGISEVLAR (65 aa). The Dynamin-type G domain occupies 93–342; sequence ARRHMKVAFF…VRMFEFQNFE (250 aa). Positions 103–110 are G1 motif; it reads GRTSNGKS. Position 106–111 (106–111) interacts with GTP; the sequence is SNGKST. Residue Thr111 is modified to Phosphothreonine; by PINK1. A G2 motif region spans residues 129 to 130; sequence TT. The interval 199-202 is G3 motif; sequence DSPG. GTP is bound at residue 258-261; it reads NRWD. A G4 motif region spans residues 258-261; it reads NRWD. A region of interest (G5 motif) is located at residue Glu288. The GTP site is built by Ser305 and Lys307. Residues 359-385 are part of a helix bundle domain, formed by helices from N-terminal and C-terminal regions; the sequence is EQHTVRAKQIAEAVRLIMDSLHIAAQE. Residues 406-435 are a coiled coil; it reads KQLELLAQDYKLRIKQMTEEVERQVSTAMA. Ser442 bears the Phosphoserine; by PINK1 mark. A helical membrane pass occupies residues 605-625; sequence TGLASLTSRTSMGILVVGGVV. Residue Trp626 is a topological domain, mitochondrial intermembrane. A helical membrane pass occupies residues 627–647; that stretch reads KAVGWRLIALSFGLYGLLYVY. At 648 to 757 the chain is on the cytoplasmic side; that stretch reads ERLTWTTRAK…FIHQYLQPSR (110 aa). A coiled-coil region spans residues 696–738; it reads FAHLCQQVDITRDNLEQEIAAMNKKVEALDSLQSKAKLLRNKA. Residues 722–753 form a part of a helix bundle domain, formed by helices from N-terminal and C-terminal regions region; it reads EALDSLQSKAKLLRNKAGWLDSELNMFIHQYL.

This sequence belongs to the TRAFAC class dynamin-like GTPase superfamily. Dynamin/Fzo/YdjA family. Mitofusin subfamily. Forms homomultimers and heteromultimers with MFN1. Oligomerization is essential for mitochondrion fusion. Interacts with VAT1. Interacts with STOML2; may form heterooligomers. Interacts (phosphorylated) with PRKN. Interacts with EIF2AK3. Interacts with THG1L; THG1L probably functions as a guanyl-nucleotide exchange factor/GEF, activating MFN2. Phosphorylated by PINK1. Post-translationally, ubiquitinated by non-degradative ubiquitin by PRKN, promoting mitochondrial fusion; deubiquitination by USP30 inhibits mitochondrial fusion. Ubiquitinated by HUWE1 when dietary stearate (C18:0) levels are low; ubiquitination inhibits mitochondrial fusion. Ubiquitous. In brain, it is more expressed than MFN1, while it is expressed at a weaker level than MFN1 in heart and testis. Expressed at high level in elongating spermatids of seminiferous tubules. Expression is markedly down-regulated in highly proliferative vascular smooth muscle cells (VSMCs) from the genetic hypertensive animal model SHR, as well as in balloon-injured Wistar Kyoto arteries.

Its subcellular location is the mitochondrion outer membrane. The catalysed reaction is GTP + H2O = GDP + phosphate + H(+). Functionally, mitochondrial outer membrane GTPase that mediates mitochondrial clustering and fusion. Mitochondria are highly dynamic organelles, and their morphology is determined by the equilibrium between mitochondrial fusion and fission events. Overexpression induces the formation of mitochondrial networks. Membrane clustering requires GTPase activity and may involve a major rearrangement of the coiled coil domains. Plays a central role in mitochondrial metabolism and may be associated with obesity and/or apoptosis processes. Plays an important role in the regulation of vascular smooth muscle cell proliferation. Involved in the clearance of damaged mitochondria via selective autophagy (mitophagy). Is required for PRKN recruitment to dysfunctional mitochondria. Involved in the control of unfolded protein response (UPR) upon ER stress including activation of apoptosis and autophagy during ER stress. Acts as an upstream regulator of EIF2AK3 and suppresses EIF2AK3 activation under basal conditions. This Rattus norvegicus (Rat) protein is Mitofusin-2 (Mfn2).